We begin with the raw amino-acid sequence, 148 residues long: SsrA-binding protein (148 aa).

The protein belongs to the SmpB family.

It is found in the cytoplasm. In terms of biological role, required for rescue of stalled ribosomes mediated by trans-translation. Binds to transfer-messenger RNA (tmRNA), required for stable association of tmRNA with ribosomes. tmRNA and SmpB together mimic tRNA shape, replacing the anticodon stem-loop with SmpB. tmRNA is encoded by the ssrA gene; the 2 termini fold to resemble tRNA(Ala) and it encodes a 'tag peptide', a short internal open reading frame. During trans-translation Ala-aminoacylated tmRNA acts like a tRNA, entering the A-site of stalled ribosomes, displacing the stalled mRNA. The ribosome then switches to translate the ORF on the tmRNA; the nascent peptide is terminated with the 'tag peptide' encoded by the tmRNA and targeted for degradation. The ribosome is freed to recommence translation, which seems to be the essential function of trans-translation. This Mycoplasma mycoides subsp. mycoides SC (strain CCUG 32753 / NCTC 10114 / PG1) protein is SsrA-binding protein.